A 299-amino-acid polypeptide reads, in one-letter code: Proline iminopeptidase (299 aa).

In terms of domain architecture, AB hydrolase-1 spans 29–279; it reads PLLLLHGGPG…SRHMAFIDEP (251 aa). Serine 105 acts as the Nucleophile in catalysis. Residue aspartate 245 is part of the active site. Histidine 272 acts as the Proton donor in catalysis.

The protein belongs to the peptidase S33 family.

Its subcellular location is the cell envelope. The enzyme catalyses Release of N-terminal proline from a peptide.. Its function is as follows. Releases the N-terminal proline from various substrates. This chain is Proline iminopeptidase, found in Levilactobacillus brevis (strain ATCC 367 / BCRC 12310 / CIP 105137 / JCM 1170 / LMG 11437 / NCIMB 947 / NCTC 947) (Lactobacillus brevis).